The following is a 919-amino-acid chain: MLX-interacting protein (919 aa).

The interval 1 to 72 (MAADVFMCSP…AGPGREEPPR (72 aa)) is disordered. Position 2 is an N-acetylalanine (Ala2). 4 positions are modified to phosphoserine: Ser9, Ser27, Ser33, and Ser39. Residues 27-37 (SEDDDDSDTDE) show a composition bias toward acidic residues. The segment covering 44–56 (SGAATPARAHASA) has biased composition (low complexity). Positions 73–327 (RQQIIHSGHF…PLQPNLDFMD (255 aa)) are required for cytoplasmic localization. The tract at residues 322–445 (NLDFMDTFEP…LLSPSPAPPP (124 aa)) is transactivation domain. Disordered regions lie at residues 542 to 562 (KPVS…PAPK) and 633 to 712 (DLGH…SDPK). Ser669 carries the phosphoserine modification. A compositionally biased stretch (polar residues) spans 670–685 (PQVTVTGPSRDCPNSG). Low complexity predominate over residues 686 to 706 (QASPCASEQSPSPQSPQNNCS). Positions 719–769 (NRQMKHISAEQKRRFNIKMCFDMLNSLISNNSKLTSHAITLQKTVEYITKL) constitute a bHLH domain. Residues 769 to 790 (LQQERGQMQEEARRLREEIEEL) are leucine-zipper. The mediates heterotypic interactions between MLXIP and MLX and is required for cytoplasmic localization stretch occupies residues 832-881 (WKFWIFSIIIKPLFESFKGMVSTSSLEELHRTALSWLDQHCSLPILRPMV).

As to quaternary structure, efficient DNA binding requires dimerization with another bHLH protein. Binds DNA as a homodimer or a heterodimer with MLX. In terms of tissue distribution, widely expressed in adult tissues. Most abundant in skeletal muscle.

It localises to the cytoplasm. It is found in the nucleus. The protein localises to the mitochondrion outer membrane. Binds DNA as a heterodimer with MLX and activates transcription. Binds to the canonical E box sequence 5'-CACGTG-3'. Plays a role in transcriptional activation of glycolytic target genes. Involved in glucose-responsive gene regulation. This is MLX-interacting protein from Homo sapiens (Human).